A 474-amino-acid chain; its full sequence is Proline--tRNA ligase (474 aa).

It belongs to the class-II aminoacyl-tRNA synthetase family. ProS type 3 subfamily. In terms of assembly, homodimer.

Its subcellular location is the cytoplasm. The catalysed reaction is tRNA(Pro) + L-proline + ATP = L-prolyl-tRNA(Pro) + AMP + diphosphate. Functionally, catalyzes the attachment of proline to tRNA(Pro) in a two-step reaction: proline is first activated by ATP to form Pro-AMP and then transferred to the acceptor end of tRNA(Pro). This is Proline--tRNA ligase from Aster yellows witches'-broom phytoplasma (strain AYWB).